The following is a 98-amino-acid chain: Phosphoribosyl-ATP pyrophosphatase (98 aa).

This sequence belongs to the PRA-PH family.

It localises to the cytoplasm. The catalysed reaction is 1-(5-phospho-beta-D-ribosyl)-ATP + H2O = 1-(5-phospho-beta-D-ribosyl)-5'-AMP + diphosphate + H(+). The protein operates within amino-acid biosynthesis; L-histidine biosynthesis; L-histidine from 5-phospho-alpha-D-ribose 1-diphosphate: step 2/9. The protein is Phosphoribosyl-ATP pyrophosphatase of Pelotomaculum thermopropionicum (strain DSM 13744 / JCM 10971 / SI).